Consider the following 191-residue polypeptide: Nucleoside triphosphate pyrophosphatase (191 aa).

The active-site Proton acceptor is Asp-70.

The protein belongs to the Maf family. A divalent metal cation is required as a cofactor.

The protein resides in the cytoplasm. It carries out the reaction a ribonucleoside 5'-triphosphate + H2O = a ribonucleoside 5'-phosphate + diphosphate + H(+). The catalysed reaction is a 2'-deoxyribonucleoside 5'-triphosphate + H2O = a 2'-deoxyribonucleoside 5'-phosphate + diphosphate + H(+). Its function is as follows. Nucleoside triphosphate pyrophosphatase. May have a dual role in cell division arrest and in preventing the incorporation of modified nucleotides into cellular nucleic acids. The sequence is that of Nucleoside triphosphate pyrophosphatase from Synechococcus sp. (strain WH7803).